A 110-amino-acid polypeptide reads, in one-letter code: NADH dehydrogenase [ubiquinone] iron-sulfur protein 6, mitochondrial (110 aa).

The transit peptide at 1–22 (MASNLLKALIRSQILPSSRRNF) directs the protein to the mitochondrion.

It belongs to the complex I NDUFS6 subunit family. As to quaternary structure, complex I is composed of at least 49 different subunits. This is a component of the iron-sulfur (IP) fragment of the enzyme.

The protein resides in the mitochondrion inner membrane. Accessory subunit of the mitochondrial membrane respiratory chain NADH dehydrogenase (Complex I), that is believed not to be involved in catalysis. Complex I functions in the transfer of electrons from NADH to the respiratory chain. The immediate electron acceptor for the enzyme is believed to be ubiquinone. The sequence is that of NADH dehydrogenase [ubiquinone] iron-sulfur protein 6, mitochondrial from Arabidopsis thaliana (Mouse-ear cress).